We begin with the raw amino-acid sequence, 89 residues long: Dynein light chain 1, cytoplasmic (89 aa).

The protein belongs to the dynein light chain family. As to quaternary structure, interacts with spn-F. Forms ternary complexes with spn-F and IKKepsilon. In terms of tissue distribution, ubiquitous.

It is found in the cytoplasm. It localises to the cytoskeleton. Its function is as follows. Acts as a non-catalytic accessory component of a dynein complex. The sequence is that of Dynein light chain 1, cytoplasmic (ctp) from Drosophila melanogaster (Fruit fly).